The following is a 248-amino-acid chain: Large ribosomal subunit protein uL30 (248 aa).

Methionine 1 bears the N-acetylmethionine mark. Repeat copies occupy residues 7 to 18 (KKKKVPAVPETL), 19 to 30 (KKKRKNFAELKI), 31 to 42 (KRLRKKFAQKML), and 43 to 54 (RKARRKLIYEKA). The 4 X 12 AA tandem repeats stretch occupies residues 7–54 (KKKKVPAVPETLKKKRKNFAELKIKRLRKKFAQKMLRKARRKLIYEKA). Threonine 17 is subject to Phosphothreonine. The residue at position 124 (lysine 124) is an N6-acetyllysine. Lysine 127 is subject to N6-succinyllysine. Tyrosine 139 carries the phosphotyrosine modification.

The protein belongs to the universal ribosomal protein uL30 family. As to quaternary structure, component of the large ribosomal subunit. Homodimer. Interacts with DHX33.

The protein resides in the cytoplasm. Its function is as follows. Component of the large ribosomal subunit. The ribosome is a large ribonucleoprotein complex responsible for the synthesis of proteins in the cell. Binds to G-rich structures in 28S rRNA and in mRNAs. Plays a regulatory role in the translation apparatus; inhibits cell-free translation of mRNAs. In Bos taurus (Bovine), this protein is Large ribosomal subunit protein uL30 (RPL7).